Reading from the N-terminus, the 446-residue chain is Phosphoglucosamine mutase (446 aa).

S100 serves as the catalytic Phosphoserine intermediate. 4 residues coordinate Mg(2+): S100, D241, D243, and D245. S100 bears the Phosphoserine mark.

It belongs to the phosphohexose mutase family. The cofactor is Mg(2+). In terms of processing, activated by phosphorylation.

The enzyme catalyses alpha-D-glucosamine 1-phosphate = D-glucosamine 6-phosphate. In terms of biological role, catalyzes the conversion of glucosamine-6-phosphate to glucosamine-1-phosphate. The chain is Phosphoglucosamine mutase from Methylorubrum extorquens (strain CM4 / NCIMB 13688) (Methylobacterium extorquens).